The sequence spans 424 residues: 5-methylthioadenosine/S-adenosylhomocysteine deaminase (424 aa).

Residues His-60 and His-62 each coordinate Zn(2+). The substrate site is built by Glu-89 and His-181. His-208 contributes to the Zn(2+) binding site. Glu-211 and Asp-296 together coordinate substrate. Residue Asp-296 coordinates Zn(2+).

This sequence belongs to the metallo-dependent hydrolases superfamily. MTA/SAH deaminase family. Zn(2+) serves as cofactor.

The catalysed reaction is S-adenosyl-L-homocysteine + H2O + H(+) = S-inosyl-L-homocysteine + NH4(+). The enzyme catalyses S-methyl-5'-thioadenosine + H2O + H(+) = S-methyl-5'-thioinosine + NH4(+). Its function is as follows. Catalyzes the deamination of 5-methylthioadenosine and S-adenosyl-L-homocysteine into 5-methylthioinosine and S-inosyl-L-homocysteine, respectively. Is also able to deaminate adenosine. This is 5-methylthioadenosine/S-adenosylhomocysteine deaminase from Thermococcus onnurineus (strain NA1).